A 547-amino-acid chain; its full sequence is ATP synthase subunit alpha (547 aa).

Residue 173–180 (GDRQTGKT) participates in ATP binding.

The protein belongs to the ATPase alpha/beta chains family. As to quaternary structure, F-type ATPases have 2 components, CF(1) - the catalytic core - and CF(0) - the membrane proton channel. CF(1) has five subunits: alpha(3), beta(3), gamma(1), delta(1), epsilon(1). CF(0) has three main subunits: a(1), b(2) and c(9-12). The alpha and beta chains form an alternating ring which encloses part of the gamma chain. CF(1) is attached to CF(0) by a central stalk formed by the gamma and epsilon chains, while a peripheral stalk is formed by the delta and b chains.

The protein localises to the cell membrane. It carries out the reaction ATP + H2O + 4 H(+)(in) = ADP + phosphate + 5 H(+)(out). Produces ATP from ADP in the presence of a proton gradient across the membrane. The alpha chain is a regulatory subunit. In Thermobifida fusca (strain YX), this protein is ATP synthase subunit alpha.